The sequence spans 152 residues: Mediator of RNA polymerase II transcription subunit 9 (152 aa).

Residues 98–150 (IKRCKALLQENEEVRNLLANSIEEWENIIADKEQQLRVKAKVLRDLDARIEKI) are a coiled coil.

Belongs to the Mediator complex subunit 9 family. In terms of assembly, component of the Mediator complex.

It is found in the nucleus. Component of the Mediator complex, a coactivator involved in the regulated transcription of nearly all RNA polymerase II-dependent genes. Mediator functions as a bridge to convey information from gene-specific regulatory proteins to the basal RNA polymerase II transcription machinery. Mediator is recruited to promoters by direct interactions with regulatory proteins and serves as a scaffold for the assembly of a functional preinitiation complex with RNA polymerase II and the general transcription factors. The chain is Mediator of RNA polymerase II transcription subunit 9 (CSE2) from Candida glabrata (strain ATCC 2001 / BCRC 20586 / JCM 3761 / NBRC 0622 / NRRL Y-65 / CBS 138) (Yeast).